Here is a 155-residue protein sequence, read N- to C-terminus: RNA pyrophosphohydrolase (155 aa).

The region spanning 5–149 is the Nudix hydrolase domain; that stretch reads EYRSGVGIML…KKPLYEKILS (145 aa). The short motif at 39–60 is the Nudix box element; it reads GGLEAKETPEVGVLRELEEETG.

The protein belongs to the Nudix hydrolase family. RppH subfamily. It depends on a divalent metal cation as a cofactor.

Functionally, accelerates the degradation of transcripts by removing pyrophosphate from the 5'-end of triphosphorylated RNA, leading to a more labile monophosphorylated state that can stimulate subsequent ribonuclease cleavage. In Zymomonas mobilis subsp. mobilis (strain ATCC 31821 / ZM4 / CP4), this protein is RNA pyrophosphohydrolase.